Here is a 230-residue protein sequence, read N- to C-terminus: 7-cyano-7-deazaguanine synthase (230 aa).

14–24 (LSGGLDSTTTL) is an ATP binding site. Cys-194, Cys-204, Cys-207, and Cys-210 together coordinate Zn(2+).

Belongs to the QueC family. Zn(2+) serves as cofactor.

The enzyme catalyses 7-carboxy-7-deazaguanine + NH4(+) + ATP = 7-cyano-7-deazaguanine + ADP + phosphate + H2O + H(+). It participates in purine metabolism; 7-cyano-7-deazaguanine biosynthesis. In terms of biological role, catalyzes the ATP-dependent conversion of 7-carboxy-7-deazaguanine (CDG) to 7-cyano-7-deazaguanine (preQ(0)). The protein is 7-cyano-7-deazaguanine synthase of Ruthia magnifica subsp. Calyptogena magnifica.